We begin with the raw amino-acid sequence, 65 residues long: UPF0434 protein HS_0657 (65 aa).

Belongs to the UPF0434 family.

The chain is UPF0434 protein HS_0657 from Histophilus somni (strain 129Pt) (Haemophilus somnus).